The primary structure comprises 295 residues: Giardin subunit alpha-1 (295 aa).

4 Annexin repeats span residues 2-71 (PKVT…MDLF), 73-143 (DRHE…MEKW), 153-223 (GSPE…AHFA), and 226-293 (GMHR…TLWR).

Belongs to the annexin family. Giardin subunit alpha subfamily.

It is found in the cytoplasm. The protein localises to the cytoskeleton. Functionally, giardins are involved in parasite attachment to the intestinal mucosa and in the cytoskeletal disassembly and reassembly that marks the transition from infectious trophozoite to transmissible cyst. They may interact with other cytoskeletal proteins such as microtubules in the microribbons or crossbridges, to maintain the integrity of the ventral disk. This is Giardin subunit alpha-1 from Giardia intestinalis (Giardia lamblia).